A 455-amino-acid polypeptide reads, in one-letter code: Bifunctional protein GlmU (455 aa).

The pyrophosphorylase stretch occupies residues 1–225 (MEVVILAAGQ…IWETLGVNSK (225 aa)). Residues 6-9 (LAAG), lysine 20, glutamine 71, 76-77 (GT), 98-100 (YGD), glycine 135, glutamate 150, asparagine 165, and asparagine 223 each bind UDP-N-acetyl-alpha-D-glucosamine. Residue aspartate 100 participates in Mg(2+) binding. Asparagine 223 contacts Mg(2+). Residues 226–246 (AQLAELERLHQRNIATRLMED) form a linker region. The interval 247–455 (GVTLFDPSRI…KRPVKKKAGE (209 aa)) is N-acetyltransferase. UDP-N-acetyl-alpha-D-glucosamine-binding residues include arginine 329 and lysine 347. Catalysis depends on histidine 359, which acts as the Proton acceptor. 2 residues coordinate UDP-N-acetyl-alpha-D-glucosamine: tyrosine 362 and asparagine 373. Residues alanine 376, 382-383 (NY), serine 401, alanine 419, and arginine 436 each bind acetyl-CoA.

This sequence in the N-terminal section; belongs to the N-acetylglucosamine-1-phosphate uridyltransferase family. The protein in the C-terminal section; belongs to the transferase hexapeptide repeat family. Homotrimer. Requires Mg(2+) as cofactor.

The protein localises to the cytoplasm. It catalyses the reaction alpha-D-glucosamine 1-phosphate + acetyl-CoA = N-acetyl-alpha-D-glucosamine 1-phosphate + CoA + H(+). It carries out the reaction N-acetyl-alpha-D-glucosamine 1-phosphate + UTP + H(+) = UDP-N-acetyl-alpha-D-glucosamine + diphosphate. It functions in the pathway nucleotide-sugar biosynthesis; UDP-N-acetyl-alpha-D-glucosamine biosynthesis; N-acetyl-alpha-D-glucosamine 1-phosphate from alpha-D-glucosamine 6-phosphate (route II): step 2/2. Its pathway is nucleotide-sugar biosynthesis; UDP-N-acetyl-alpha-D-glucosamine biosynthesis; UDP-N-acetyl-alpha-D-glucosamine from N-acetyl-alpha-D-glucosamine 1-phosphate: step 1/1. The protein operates within bacterial outer membrane biogenesis; LPS lipid A biosynthesis. Functionally, catalyzes the last two sequential reactions in the de novo biosynthetic pathway for UDP-N-acetylglucosamine (UDP-GlcNAc). The C-terminal domain catalyzes the transfer of acetyl group from acetyl coenzyme A to glucosamine-1-phosphate (GlcN-1-P) to produce N-acetylglucosamine-1-phosphate (GlcNAc-1-P), which is converted into UDP-GlcNAc by the transfer of uridine 5-monophosphate (from uridine 5-triphosphate), a reaction catalyzed by the N-terminal domain. This chain is Bifunctional protein GlmU, found in Aromatoleum aromaticum (strain DSM 19018 / LMG 30748 / EbN1) (Azoarcus sp. (strain EbN1)).